The sequence spans 523 residues: Polyamine aminopropyltransferase (523 aa).

The next 7 helical transmembrane spans lie at 20–40 (VLLA…LALL), 51–71 (IVAT…GALL), 88–108 (AVLG…FAFL), 116–136 (LVLA…VPLL), 164–184 (LGAL…LGMI), 186–206 (GAAV…IFLL), and 215–235 (LVTA…LLVH). The interval 203 to 478 (IFLLRHVVSG…APTPAVPSTA (276 aa)) is spermidine synthase. A PABS domain is found at 231 to 465 (TLLVHSHDIE…GDWGFALARL (235 aa)). An S-methyl-5'-thioadenosine-binding site is contributed by glutamine 261. Position 313 (aspartate 313) interacts with spermidine. S-methyl-5'-thioadenosine is bound by residues glutamate 333 and 365–366 (DA). The active-site Proton acceptor is the aspartate 386.

It belongs to the spermidine/spermine synthase family. In terms of assembly, homodimer or homotetramer.

The protein resides in the cell membrane. It catalyses the reaction S-adenosyl 3-(methylsulfanyl)propylamine + putrescine = S-methyl-5'-thioadenosine + spermidine + H(+). The protein operates within amine and polyamine biosynthesis; spermidine biosynthesis; spermidine from putrescine: step 1/1. Its function is as follows. Catalyzes the irreversible transfer of a propylamine group from the amino donor S-adenosylmethioninamine (decarboxy-AdoMet) to putrescine (1,4-diaminobutane) to yield spermidine. The protein is Polyamine aminopropyltransferase of Mycobacterium bovis (strain ATCC BAA-935 / AF2122/97).